Here is a 32-residue protein sequence, read N- to C-terminus: Photosystem II reaction center protein Z (32 aa).

The chain crosses the membrane as a helical span at residues 12–32 (FGAAAWIGLVLLVGTLYYFVV).

This sequence belongs to the PsbZ family. As to quaternary structure, PSII is composed of 1 copy each of membrane proteins PsbA, PsbB, PsbC, PsbD, PsbE, PsbF, PsbH, PsbI, PsbJ, PsbK, PsbL, PsbM, PsbT, PsbY, PsbZ, Psb30/Ycf12, at least 3 peripheral proteins of the oxygen-evolving complex and a large number of cofactors. It forms dimeric complexes.

The protein resides in the plastid. Its subcellular location is the chloroplast thylakoid membrane. May control the interaction of photosystem II (PSII) cores with the light-harvesting antenna, regulates electron flow through the 2 photosystem reaction centers. PSII is a light-driven water plastoquinone oxidoreductase, using light energy to abstract electrons from H(2)O, generating a proton gradient subsequently used for ATP formation. This chain is Photosystem II reaction center protein Z, found in Euglena granulata.